The sequence spans 886 residues: Alanine--tRNA ligase (886 aa).

Zn(2+) is bound by residues His-564, His-568, Cys-676, and His-680.

The protein belongs to the class-II aminoacyl-tRNA synthetase family. Zn(2+) is required as a cofactor.

It is found in the cytoplasm. The catalysed reaction is tRNA(Ala) + L-alanine + ATP = L-alanyl-tRNA(Ala) + AMP + diphosphate. Functionally, catalyzes the attachment of alanine to tRNA(Ala) in a two-step reaction: alanine is first activated by ATP to form Ala-AMP and then transferred to the acceptor end of tRNA(Ala). Also edits incorrectly charged Ser-tRNA(Ala) and Gly-tRNA(Ala) via its editing domain. The chain is Alanine--tRNA ligase from Methylobacterium sp. (strain 4-46).